Here is a 297-residue protein sequence, read N- to C-terminus: GTP-binding protein REM 1 (297 aa).

Residues 1-10 (MTLNTQQEAK) show a composition bias toward polar residues. A disordered region spans residues 1 to 73 (MTLNTQQEAK…DGWSSESSDS (73 aa)). A Phosphoserine modification is found at Ser51. Positions 64–73 (DGWSSESSDS) are enriched in low complexity. GTP is bound by residues 87 to 94 (GDPGVGKT) and 194 to 197 (NKAD). The tract at residues 267–286 (ARRFLARLTARSARRRALKA) is calmodulin-binding.

This sequence belongs to the small GTPase superfamily. RGK family. In vitro, interacts with calmodulin in a calcium-dependent manner. Interacts 14-3-3 family members including YWHAE, YWHAH, YWHAQ, YWHAZ in a phosphorylation-dependent manner. In terms of tissue distribution, high expression in cardiac muscle. Moderate expression in lung, skeletal muscle and kidney. Low levels in spleen and brain.

Its function is as follows. Promotes endothelial cell sprouting and actin cytoskeletal reorganization. May be involved in angiogenesis. May function in Ca(2+) signaling. The sequence is that of GTP-binding protein REM 1 (Rem1) from Mus musculus (Mouse).